A 459-amino-acid polypeptide reads, in one-letter code: Cysteine--tRNA ligase (459 aa).

Residue C27 participates in Zn(2+) binding. The short motif at 29 to 39 (ITVYDDCHIGH) is the 'HIGH' region element. Residues C208, H233, and E237 each contribute to the Zn(2+) site. The 'KMSKS' region motif lies at 265–269 (KMSKS). K268 is an ATP binding site.

The protein belongs to the class-I aminoacyl-tRNA synthetase family. Monomer. It depends on Zn(2+) as a cofactor.

It is found in the cytoplasm. It carries out the reaction tRNA(Cys) + L-cysteine + ATP = L-cysteinyl-tRNA(Cys) + AMP + diphosphate. The chain is Cysteine--tRNA ligase from Francisella philomiragia subsp. philomiragia (strain ATCC 25017 / CCUG 19701 / FSC 153 / O#319-036).